The following is a 73-amino-acid chain: Large ribosomal subunit protein uL24 (73 aa).

Residues 53-65 (NPKGGFIKKEKPM) show a composition bias toward basic and acidic residues. The tract at residues 53 to 73 (NPKGGFIKKEKPMHISNVKKA) is disordered.

This sequence belongs to the universal ribosomal protein uL24 family. In terms of assembly, part of the 50S ribosomal subunit.

One of two assembly initiator proteins, it binds directly to the 5'-end of the 23S rRNA, where it nucleates assembly of the 50S subunit. In terms of biological role, one of the proteins that surrounds the polypeptide exit tunnel on the outside of the subunit. The protein is Large ribosomal subunit protein uL24 of Helicobacter pylori (strain J99 / ATCC 700824) (Campylobacter pylori J99).